The chain runs to 177 residues: Biotin-dependent acetyl-/propionyl-coenzyme A carboxylase epsilon subunit (177 aa).

The disordered stretch occupies residues 1–112; it reads MGTCPCESSE…TEKPLHPHEP (112 aa). Residues 18–100 show a composition bias toward polar residues; sequence VSGTNEVSDG…SDGNETNNPA (83 aa).

As to quaternary structure, interacts with the AccA3/AccD5 biotin-dependent acyl-CoA carboxylase complex. Interacts with the AccA3/AccD6 complex. Is also part of the long-chain acyl-CoA carboxylase (LCC) complex, which is composed of AccA3, AccD4, AccD5 and AccE5. The four subunits are essential for activity, but AccD5, together with AccE5, probably plays a structural role rather than a catalytic one.

In terms of biological role, stimulates activity of the AccA3/AccD5 biotin-dependent acyl-CoA carboxylase complex. Interacts with AccD5 and modulates its carboxylase activity for acetyl-CoA and propionyl-CoA. Inhibits activity of the AccA3/AccD6 complex. Is also required for the activity of the long-chain acyl-CoA carboxylase (LCC) complex. This is Biotin-dependent acetyl-/propionyl-coenzyme A carboxylase epsilon subunit from Mycobacterium tuberculosis (strain ATCC 25618 / H37Rv).